Consider the following 466-residue polypeptide: MNRVSISDIYKDDIIVNSLITVCGWVRNRRSSKSGFSFITIYDGSCFNSIQVIANNTLPNYYKEILHLTTGCSVMLSGKLILSIGDKQKYEIQLKKIKVLGWVENPETYPISSKKHSTEYLREVAHLRSRTNLIGAIARIRNYILHSLHHFFYKEKYYWVPTPIITSLNTEGAGEMFRVSTLDMENIPKNLDSSVDFKKDFFGKESFLTVSGQLNLETYACSLSKVYTFGPTFRAENSNTGRHLAEFWMLEVESAFTDLNDISDFAECMLKYVCKSLLKKCITDINFLENYTNSNIVDRLEKFLLVDFVRIDYVEVINILLDSKIKFNNSVFLGIDLSSEHERFLVENYFKIPVIVKNYPKELKAFYMRLNNDKKTVAAIDILVPNVGELIGGSQREERIAILDERLLELGLKKEDYWWYRDLRRYGTVPHSGFGMGFERLISYFTGITNIRDLIPFPRTVNNAYF.

Belongs to the class-II aminoacyl-tRNA synthetase family. As to quaternary structure, homodimer.

It localises to the cytoplasm. The catalysed reaction is tRNA(Asn) + L-asparagine + ATP = L-asparaginyl-tRNA(Asn) + AMP + diphosphate + H(+). The sequence is that of Asparagine--tRNA ligase from Buchnera aphidicola subsp. Acyrthosiphon pisum (strain APS) (Acyrthosiphon pisum symbiotic bacterium).